The following is a 474-amino-acid chain: Semenogelin-2 (474 aa).

The N-terminal stretch at 1-23 is a signal peptide; it reads MKSIILFVLSLLLILEKQAAVMG. 5 disordered regions span residues 24 to 62, 132 to 158, 173 to 194, 226 to 247, and 272 to 474; these read QKGG…SKGS, GGQA…LSSQ, KEQA…QSSY, VREE…DRLQ, and NLNQ…SSTE. 3 stretches are compositionally biased toward polar residues: residues 31–40, 137–158, and 174–194; these read QLPSGSSQFP, RGTQ…LSSQ, and EQAS…QSSY. The segment covering 292–310 has biased composition (basic and acidic residues); that stretch reads RTEERQLNHGEKSVQKDVS. Positions 325 to 334 are enriched in polar residues; it reads KSQNQVTIHS. Residues 335–346 are compositionally biased toward basic and acidic residues; it reads QDQEHGHKENKM. Positions 372-397 are enriched in polar residues; the sequence is GSISIQTEEQIHGKSQNQVRIPSQAQ. Basic and acidic residues predominate over residues 399 to 426; it reads YGHKENKISYRSSSTEERRLNSGEKDVQ. The segment covering 445-455 has biased composition (polar residues); the sequence is KSQNQVTIPSQ. Residues 456 to 465 are compositionally biased toward basic and acidic residues; the sequence is DQEHGHKENK.

The protein belongs to the semenogelin family. In terms of assembly, interacts with SERPINA5.

It is found in the secreted. Participates in the formation of a gel matrix (sperm coagulum) entrapping the accessory gland secretions and ejaculated spermatozoa. The protein is Semenogelin-2 (SEMG2) of Gorilla gorilla gorilla (Western lowland gorilla).